The sequence spans 149 residues: IQ domain-containing protein F5 (149 aa).

2 consecutive IQ domains span residues 12–41 (ENKAIVSIQAWWRGTLVRRTLLHAALRAWI) and 68–97 (QEWAVVKLQSWVRMWCIRLRYLRLLHAVRI).

In Bos taurus (Bovine), this protein is IQ domain-containing protein F5 (IQCF5).